We begin with the raw amino-acid sequence, 71 residues long: Phosphatidylinositol N-acetylglucosaminyltransferase subunit Y (71 aa).

At 1–5 (MIRSL) the chain is on the cytoplasmic side. A helical transmembrane segment spans residues 6–26 (PTMTVLIPLVSLAGLLYSASV). Topologically, residues 27 to 44 (EEGFPEGCTSASSLCFYS) are lumenal. The chain crosses the membrane as a helical span at residues 45-65 (LLLPVTVPVYVFFHLWTWMGL). The Cytoplasmic segment spans residues 66–71 (KLFRHN).

As to quaternary structure, component of the glycosylphosphatidylinositol-N-acetylglucosaminyltransferase (GPI-GnT) complex composed at least by PIGA, PIGC, PIGH, PIGP, PIGQ, PIGY and DPM2. Interacts directly with PIGA; this interaction regulates glycosylphosphatidylinositol-N-acetylglucosaminyltransferase activity. Does not interact with Ras proteins.

It is found in the endoplasmic reticulum membrane. It functions in the pathway glycolipid biosynthesis; glycosylphosphatidylinositol-anchor biosynthesis. Its function is as follows. Part of the glycosylphosphatidylinositol-N-acetylglucosaminyltransferase (GPI-GnT) complex that catalyzes the transfer of N-acetylglucosamine from UDP-N-acetylglucosamine to phosphatidylinositol and participates in the first step of GPI biosynthesis. May act by regulating the catalytic subunit PIGA. In Mus musculus (Mouse), this protein is Phosphatidylinositol N-acetylglucosaminyltransferase subunit Y.